The sequence spans 80 residues: Turripeptide VI/VII-01 (80 aa).

The signal sequence occupies residues Met1–Ala22. Residues Ala23–Met36 constitute a propeptide that is removed on maturation. 3 disulfide bridges follow: Cys48–Cys61, Cys50–Cys65, and Cys60–Cys70. A propeptide spanning residues Ser77–Ile80 is cleaved from the precursor.

Expressed by the venom duct.

Its subcellular location is the secreted. The protein is Turripeptide VI/VII-01 of Gemmula speciosa (Splendid gem-turris).